Reading from the N-terminus, the 722-residue chain is Probable dipeptidyl-peptidase 5 (722 aa).

The N-terminal stretch at 1–18 is a signal peptide; sequence MGALRWLSLAAAASSALA. N-linked (GlcNAc...) asparagine glycosylation is found at Asn-75, Asn-78, Asn-86, Asn-94, Asn-151, Asn-253, and Asn-448. Ser-558 serves as the catalytic Charge relay system. Asn-605 is a glycosylation site (N-linked (GlcNAc...) asparagine). Catalysis depends on charge relay system residues Asp-641 and His-673.

The protein belongs to the peptidase S9C family.

The protein localises to the secreted. Extracellular dipeptidyl-peptidase which removes N-terminal dipeptides sequentially from polypeptides having unsubstituted N-termini. The polypeptide is Probable dipeptidyl-peptidase 5 (dpp5) (Emericella nidulans (strain FGSC A4 / ATCC 38163 / CBS 112.46 / NRRL 194 / M139) (Aspergillus nidulans)).